A 392-amino-acid chain; its full sequence is 5-amino-6-(D-ribitylamino)uracil--L-tyrosine 4-hydroxyphenyl transferase (392 aa).

One can recognise a Radical SAM core domain in the interval 60–307; sequence VTYVVNRNIN…MAIARLYLGK (248 aa). C74, C78, and C81 together coordinate [4Fe-4S] cluster.

This sequence belongs to the radical SAM superfamily. CofH family. As to quaternary structure, consists of two subunits, CofG and CofH. [4Fe-4S] cluster is required as a cofactor.

The enzyme catalyses 5-amino-6-(D-ribitylamino)uracil + L-tyrosine + S-adenosyl-L-methionine = 5-amino-5-(4-hydroxybenzyl)-6-(D-ribitylimino)-5,6-dihydrouracil + 2-iminoacetate + 5'-deoxyadenosine + L-methionine + H(+). It participates in cofactor biosynthesis; coenzyme F0 biosynthesis. Catalyzes the radical-mediated synthesis of 5-amino-5-(4-hydroxybenzyl)-6-(D-ribitylimino)-5,6-dihydrouracil from 5-amino-6-(D-ribitylamino)uracil and L-tyrosine. This is 5-amino-6-(D-ribitylamino)uracil--L-tyrosine 4-hydroxyphenyl transferase from Synechocystis sp. (strain ATCC 27184 / PCC 6803 / Kazusa).